We begin with the raw amino-acid sequence, 121 residues long: uncharacterized protein (121 aa).

Positions 20–98 (NEVRTSQSEV…PYYHGSKAST (79 aa)) are disordered. Residues 35-51 (KKSDNGEKDEKEEKELN) show a composition bias toward basic and acidic residues.

This is an uncharacterized protein from Invertebrate iridescent virus 6 (IIV-6).